Reading from the N-terminus, the 283-residue chain is Bifunctional protein FolD (283 aa).

Residues 165–167 (GRS) and Ser-190 contribute to the NADP(+) site.

It belongs to the tetrahydrofolate dehydrogenase/cyclohydrolase family. In terms of assembly, homodimer.

It carries out the reaction (6R)-5,10-methylene-5,6,7,8-tetrahydrofolate + NADP(+) = (6R)-5,10-methenyltetrahydrofolate + NADPH. The enzyme catalyses (6R)-5,10-methenyltetrahydrofolate + H2O = (6R)-10-formyltetrahydrofolate + H(+). It functions in the pathway one-carbon metabolism; tetrahydrofolate interconversion. In terms of biological role, catalyzes the oxidation of 5,10-methylenetetrahydrofolate to 5,10-methenyltetrahydrofolate and then the hydrolysis of 5,10-methenyltetrahydrofolate to 10-formyltetrahydrofolate. The chain is Bifunctional protein FolD from Variovorax paradoxus (strain S110).